Reading from the N-terminus, the 334-residue chain is Syntaxin-18 (334 aa).

The Cytoplasmic segment spans residues 1 to 308 (MAVDITLLFR…EDIREAIKNN (308 aa)). Disordered stretches follow at residues 29 to 50 (GGADGSRDELFRRSPRPKGDFS) and 166 to 225 (LSKL…GEDE). Composition is skewed to basic and acidic residues over residues 33-50 (GSRDELFRRSPRPKGDFS), 166-186 (LSKLEPEPHTKRKEPASEKSS), and 193-207 (SEEKPAAEDLPEKPL). The t-SNARE coiled-coil homology domain maps to 242 to 304 (IGEMNSLFDE…KEGNEDIREA (63 aa)). Residues 309–329 (AGFRVWILFFLVMCSFSLLFL) form a helical; Anchor for type IV membrane protein membrane-spanning segment. The Vesicular segment spans residues 330 to 334 (DWYDS).

Belongs to the syntaxin family. In terms of assembly, component of a SNARE complex consisting of STX18, USE1L, BNIP1/SEC20L, and SEC22B. RINT1/TIP20L and ZW10 are associated with the complex through interaction with BNIP1/SEC20L. Interacts directly with USE1L and BNIP1/SEC20L.

It localises to the endoplasmic reticulum membrane. The protein localises to the golgi apparatus membrane. Functionally, syntaxin that may be involved in targeting and fusion of Golgi-derived retrograde transport vesicles with the ER. This chain is Syntaxin-18 (Stx18), found in Rattus norvegicus (Rat).